The primary structure comprises 341 residues: Large ribosomal subunit protein uL3 (341 aa).

2 disordered regions span residues 1–31 (MGHR…SPRS) and 234–261 (HRKG…GQMG).

Belongs to the universal ribosomal protein uL3 family. Part of the 50S ribosomal subunit. Forms a cluster with proteins L14 and L24e.

One of the primary rRNA binding proteins, it binds directly near the 3'-end of the 23S rRNA, where it nucleates assembly of the 50S subunit. This is Large ribosomal subunit protein uL3 from Metallosphaera sedula (strain ATCC 51363 / DSM 5348 / JCM 9185 / NBRC 15509 / TH2).